A 368-amino-acid polypeptide reads, in one-letter code: Putative phospho-2-dehydro-3-deoxyheptonate aldolase (368 aa).

It belongs to the class-I DAHP synthase family.

The enzyme catalyses D-erythrose 4-phosphate + phosphoenolpyruvate + H2O = 7-phospho-2-dehydro-3-deoxy-D-arabino-heptonate + phosphate. The protein operates within metabolic intermediate biosynthesis; chorismate biosynthesis; chorismate from D-erythrose 4-phosphate and phosphoenolpyruvate: step 1/7. Functionally, stereospecific condensation of phosphoenolpyruvate (PEP) and D-erythrose-4-phosphate (E4P) giving rise to 3-deoxy-D-arabino-heptulosonate-7-phosphate (DAHP). The polypeptide is Putative phospho-2-dehydro-3-deoxyheptonate aldolase (Schizosaccharomyces pombe (strain 972 / ATCC 24843) (Fission yeast)).